The primary structure comprises 169 residues: Der GTPase-activating protein YihI (169 aa).

Disordered stretches follow at residues 1–99 (MKPS…QAEL) and 146–169 (SYDD…LRGN). Basic residues predominate over residues 10 to 19 (SKGHAKARRK). Residues 20 to 30 (TREELDQEARD) show a composition bias toward basic and acidic residues. The segment covering 31 to 40 (RKRQKKRRGH) has biased composition (basic residues). Positions 49–58 (GNTTSGSKGQ) are enriched in polar residues. Positions 147–159 (YDDDEEEEEDEKQ) are enriched in acidic residues. Basic and acidic residues predominate over residues 160 to 169 (EDMMRLLRGN).

Belongs to the YihI family. Interacts with Der.

Functionally, a GTPase-activating protein (GAP) that modifies Der/EngA GTPase function. May play a role in ribosome biogenesis. This is Der GTPase-activating protein YihI from Escherichia coli O45:K1 (strain S88 / ExPEC).